The sequence spans 170 residues: Alpha-crystallin A chain (170 aa).

Methionine 1 carries the post-translational modification N-acetylmethionine. The tract at residues 1 to 63 (MDVTIQHPWF…RTVLDSGISE (63 aa)) is required for complex formation with BFSP1 and BFSP2. Glutamine 6 carries the post-translational modification Deamidated glutamine; partial. Serine 45 is modified (phosphoserine). Glutamine 50 is subject to Deamidated glutamine; partial. Positions 52 to 161 (LFRTVLDSGI…SERTIPVSRE (110 aa)) constitute a sHSP domain. Lysine 70 and lysine 99 each carry N6-acetyllysine. Residue histidine 100 participates in Zn(2+) binding. The residue at position 101 (asparagine 101) is a Deamidated asparagine; partial. Glutamate 102, histidine 107, and histidine 151 together coordinate Zn(2+). The segment at 144-170 (PKIVDPSHSERTIPVSREEKPSSAPSS) is disordered. Over residues 148–164 (DPSHSERTIPVSREEKP) the composition is skewed to basic and acidic residues. O-linked (GlcNAc) serine glycosylation is present at serine 159.

This sequence belongs to the small heat shock protein (HSP20) family. In terms of assembly, heteromer composed of three CRYAA and one CRYAB subunits. Inter-subunit bridging via zinc ions enhances stability, which is crucial as there is no protein turn over in the lens. Can also form homodimers and homotetramers (dimers of dimers) which serve as the building blocks of homooligomers. Within homooligomers, the zinc-binding motif is created from residues of 3 different molecules. His-100 and Glu-102 from one molecule are ligands of the zinc ion, and His-107 and His-151 residues from additional molecules complete the site with tetrahedral coordination geometry. Part of a complex required for lens intermediate filament formation composed of BFSP1, BFSP2 and CRYAA. In terms of processing, acetylation at Lys-70 may increase chaperone activity. Undergoes age-dependent proteolytical cleavage at the C-terminus.

It localises to the cytoplasm. The protein localises to the nucleus. Contributes to the transparency and refractive index of the lens. Acts as a chaperone, preventing aggregation of various proteins under a wide range of stress conditions. Required for the correct formation of lens intermediate filaments as part of a complex composed of BFSP1, BFSP2 and CRYAA. The protein is Alpha-crystallin A chain (CRYAA) of Choloepus hoffmanni (Hoffmann's two-fingered sloth).